Here is a 565-residue protein sequence, read N- to C-terminus: Adenine deaminase (565 aa).

This sequence belongs to the metallo-dependent hydrolases superfamily. Adenine deaminase family. Requires Mn(2+) as cofactor.

It catalyses the reaction adenine + H2O + H(+) = hypoxanthine + NH4(+). This Cereibacter sphaeroides (strain KD131 / KCTC 12085) (Rhodobacter sphaeroides) protein is Adenine deaminase.